The sequence spans 316 residues: 4-amino-5-hydroxymethyl-2-methylpyrimidine phosphate synthase (316 aa).

At lysine 66 the chain carries N6-(pyridoxal phosphate)lysine. The active site involves histidine 70. Residue 118-121 participates in pyridoxal 5'-phosphate binding; sequence GEFG. Positions 191-195 match the CCCFC; essential for catalytic activity, may be the site of iron coordination motif; it reads CCCFC.

The protein belongs to the NMT1/THI5 family. As to quaternary structure, homodimer. The cofactor is Fe cation.

The enzyme catalyses N(6)-(pyridoxal phosphate)-L-lysyl-[4-amino-5-hydroxymethyl-2-methylpyrimidine phosphate synthase] + L-histidyl-[4-amino-5-hydroxymethyl-2-methylpyrimidine phosphate synthase] + 2 Fe(3+) + 4 H2O = L-lysyl-[4-amino-5-hydroxymethyl-2-methylpyrimidine phosphate synthase] + (2S)-2-amino-5-hydroxy-4-oxopentanoyl-[4-amino-5-hydroxymethyl-2-methylpyrimidine phosphate synthase] + 4-amino-2-methyl-5-(phosphooxymethyl)pyrimidine + 3-oxopropanoate + 2 Fe(2+) + 2 H(+). It participates in cofactor biosynthesis; thiamine diphosphate biosynthesis. In terms of biological role, responsible for the formation of the pyrimidine heterocycle in the thiamine biosynthesis pathway. Catalyzes the formation of hydroxymethylpyrimidine phosphate (HMP-P) from histidine and pyridoxal phosphate (PLP). The protein uses PLP and the active site histidine to form HMP-P, generating an inactive enzyme. The enzyme can only undergo a single turnover, which suggests it is a suicide enzyme. The chain is 4-amino-5-hydroxymethyl-2-methylpyrimidine phosphate synthase from Legionella pneumophila subsp. pneumophila (strain Philadelphia 1 / ATCC 33152 / DSM 7513).